Consider the following 252-residue polypeptide: Cell division protein ZapD (252 aa).

It belongs to the ZapD family. Interacts with FtsZ.

The protein localises to the cytoplasm. In terms of biological role, cell division factor that enhances FtsZ-ring assembly. Directly interacts with FtsZ and promotes bundling of FtsZ protofilaments, with a reduction in FtsZ GTPase activity. This Cupriavidus pinatubonensis (strain JMP 134 / LMG 1197) (Cupriavidus necator (strain JMP 134)) protein is Cell division protein ZapD.